The sequence spans 104 residues: Iron-sulfur cluster assembly protein CyaY (104 aa).

It belongs to the frataxin family.

Its function is as follows. Involved in iron-sulfur (Fe-S) cluster assembly. May act as a regulator of Fe-S biogenesis. This Aliivibrio fischeri (strain MJ11) (Vibrio fischeri) protein is Iron-sulfur cluster assembly protein CyaY.